A 397-amino-acid chain; its full sequence is ATP-dependent RNA helicase RhlB (397 aa).

Residues 8-36 carry the Q motif motif; it reads TRFHDFNLAPELMHAIQDLGFPYCTPIQA. Residues 39–219 form the Helicase ATP-binding domain; that stretch reads LGFTLKGKDA…KQWTTDPSIV (181 aa). Position 52-59 (52-59) interacts with ATP; it reads AQTGTGKT. The DEAD box motif lies at 165 to 168; that stretch reads DEAD. The 151-residue stretch at 242 to 392 folds into the Helicase C-terminal domain; sequence DKYKLLYNLV…TPPTHLLRAV (151 aa).

It belongs to the DEAD box helicase family. RhlB subfamily. Component of the RNA degradosome, which is a multiprotein complex involved in RNA processing and mRNA degradation.

Its subcellular location is the cytoplasm. The enzyme catalyses ATP + H2O = ADP + phosphate + H(+). In terms of biological role, DEAD-box RNA helicase involved in RNA degradation. Has RNA-dependent ATPase activity and unwinds double-stranded RNA. The protein is ATP-dependent RNA helicase RhlB of Pseudomonas syringae pv. tomato (strain ATCC BAA-871 / DC3000).